The primary structure comprises 421 residues: UDP-N-acetylglucosamine 1-carboxyvinyltransferase (421 aa).

22-23 lines the phosphoenolpyruvate pocket; it reads KN. Residue R93 coordinates UDP-N-acetyl-alpha-D-glucosamine. The active-site Proton donor is the C117. C117 carries the 2-(S-cysteinyl)pyruvic acid O-phosphothioketal modification. Residues 122–126, D308, and V330 each bind UDP-N-acetyl-alpha-D-glucosamine; that span reads RPVDL.

This sequence belongs to the EPSP synthase family. MurA subfamily.

It is found in the cytoplasm. It carries out the reaction phosphoenolpyruvate + UDP-N-acetyl-alpha-D-glucosamine = UDP-N-acetyl-3-O-(1-carboxyvinyl)-alpha-D-glucosamine + phosphate. It participates in cell wall biogenesis; peptidoglycan biosynthesis. Functionally, cell wall formation. Adds enolpyruvyl to UDP-N-acetylglucosamine. In Pseudomonas paraeruginosa (strain DSM 24068 / PA7) (Pseudomonas aeruginosa (strain PA7)), this protein is UDP-N-acetylglucosamine 1-carboxyvinyltransferase.